The sequence spans 359 residues: Zinc finger CCCH domain-containing protein 20 (359 aa).

3 C3H1-type zinc fingers span residues 75–107 (TCDHFRMYEFKVRRCARGRSHDWTECPYAHPGE), 119–145 (YSGTACPEFRKGCCKRGDACEFSHGVF), and 153–177 (RYRTQPCKDGGNCRRRVCFFAHSPD). Disordered regions lie at residues 207 to 226 (SISPSSNSPPVSPRGDSDSS) and 334 to 359 (MGRIEPDPDQGAGDTPDVGWVSDLVM).

The sequence is that of Zinc finger CCCH domain-containing protein 20 from Arabidopsis thaliana (Mouse-ear cress).